The chain runs to 242 residues: Uridylate kinase (242 aa).

16 to 19 (KVSG) provides a ligand contact to ATP. A UMP-binding site is contributed by Gly-58. Gly-59 and Arg-63 together coordinate ATP. UMP-binding positions include Asp-78 and 139–146 (TGNPFCTT). ATP is bound by residues Thr-166, Gln-167, Tyr-172, and Asp-175.

This sequence belongs to the UMP kinase family. Homohexamer.

The protein localises to the cytoplasm. The catalysed reaction is UMP + ATP = UDP + ADP. It functions in the pathway pyrimidine metabolism; CTP biosynthesis via de novo pathway; UDP from UMP (UMPK route): step 1/1. Its activity is regulated as follows. Inhibited by UTP. In terms of biological role, catalyzes the reversible phosphorylation of UMP to UDP. The protein is Uridylate kinase of Rickettsia conorii (strain ATCC VR-613 / Malish 7).